The following is a 191-amino-acid chain: Adenylate kinase (191 aa).

11-16 lines the ATP pocket; it reads GSGKGT. The NMP stretch occupies residues 31–60; the sequence is STGEILRREIKDKTELGKIAEEYINQGQLL. Residues threonine 32, arginine 37, 58–60, 86–89, and glutamine 93 contribute to the AMP site; these read QLL and GFPR. The tract at residues 127-137 is LID; that stretch reads KRGKLFSRKDD. Arginine 128 serves as a coordination point for ATP. AMP contacts are provided by arginine 134 and arginine 145. Asparagine 173 lines the ATP pocket.

Belongs to the adenylate kinase family. As to quaternary structure, monomer.

It localises to the cytoplasm. The enzyme catalyses AMP + ATP = 2 ADP. It functions in the pathway purine metabolism; AMP biosynthesis via salvage pathway; AMP from ADP: step 1/1. Catalyzes the reversible transfer of the terminal phosphate group between ATP and AMP. Plays an important role in cellular energy homeostasis and in adenine nucleotide metabolism. The chain is Adenylate kinase from Azobacteroides pseudotrichonymphae genomovar. CFP2.